Here is a 122-residue protein sequence, read N- to C-terminus: Large ribosomal subunit protein uL14 (122 aa).

The protein belongs to the universal ribosomal protein uL14 family. As to quaternary structure, part of the 50S ribosomal subunit. Forms a cluster with proteins L3 and L19. In the 70S ribosome, L14 and L19 interact and together make contacts with the 16S rRNA in bridges B5 and B8.

Its function is as follows. Binds to 23S rRNA. Forms part of two intersubunit bridges in the 70S ribosome. The chain is Large ribosomal subunit protein uL14 from Burkholderia lata (strain ATCC 17760 / DSM 23089 / LMG 22485 / NCIMB 9086 / R18194 / 383).